The primary structure comprises 74 residues: uncharacterized protein (74 aa).

The segment at 55 to 74 is disordered; the sequence is DENSESESKDGASWFKVYRG.

This is an uncharacterized protein from Listeria innocua serovar 6a (strain ATCC BAA-680 / CLIP 11262).